Reading from the N-terminus, the 431-residue chain is Cleavage stimulation factor subunit 1 (431 aa).

The hydrophobic stretch occupies residues 14–35 (LYKLIISQLLYDGYISIANGLI). WD repeat units follow at residues 106–145 (SHKG…AKSA), 171–210 (DHVD…AKRA), 215–254 (QEAE…CFVS), 260–301 (QHTD…TTFE), 303–343 (AHDG…TLVR), and 395–430 (GHNN…RSTT).

As to quaternary structure, homodimer. The CSTF complex is composed of CSTF1 (50 kDa subunit), CSTF2 (64 kDa subunit) and CSTF3 (77 kDa subunit). Interacts (via repeats WD) directly with CSTF3. Interacts (via repeat WD6) with BARD1. Interacts with ERCC6. In terms of processing, the N-terminus is blocked.

It localises to the nucleus. Its function is as follows. One of the multiple factors required for polyadenylation and 3'-end cleavage of mammalian pre-mRNAs. May be responsible for the interaction of CSTF with other factors to form a stable complex on the pre-mRNA. This is Cleavage stimulation factor subunit 1 (CSTF1) from Homo sapiens (Human).